A 624-amino-acid polypeptide reads, in one-letter code: DNA-directed RNA polymerase subunit gamma (624 aa).

Zn(2+) contacts are provided by C70, C72, C85, and C88. Mg(2+) is bound by residues D466, D468, and D470.

Belongs to the RNA polymerase beta' chain family. RpoC1 subfamily. In terms of assembly, in cyanobacteria the RNAP catalytic core is composed of 2 alpha, 1 beta, 1 beta', 1 gamma and 1 omega subunit. When a sigma factor is associated with the core the holoenzyme is formed, which can initiate transcription. It depends on Mg(2+) as a cofactor. Zn(2+) serves as cofactor.

The catalysed reaction is RNA(n) + a ribonucleoside 5'-triphosphate = RNA(n+1) + diphosphate. Its function is as follows. DNA-dependent RNA polymerase catalyzes the transcription of DNA into RNA using the four ribonucleoside triphosphates as substrates. The protein is DNA-directed RNA polymerase subunit gamma of Synechococcus elongatus (strain ATCC 33912 / PCC 7942 / FACHB-805) (Anacystis nidulans R2).